The sequence spans 149 residues: UPF0178 protein Mmwyl1_2258 (149 aa).

This sequence belongs to the UPF0178 family.

The polypeptide is UPF0178 protein Mmwyl1_2258 (Marinomonas sp. (strain MWYL1)).